A 201-amino-acid polypeptide reads, in one-letter code: Holliday junction branch migration complex subunit RuvA (201 aa).

A domain I region spans residues 1–63; that stretch reads MIEFVRGYVD…EDTLALYGFR (63 aa). Residues 64–142 are domain II; it reads TREERTLFAK…AVTAKTFPDL (79 aa). The segment at 143 to 153 is flexible linker; sequence FHLQEESARPH. A domain III region spans residues 153–201; that stretch reads HLSALEEAIEALKALGYAEREIQKVVPSLMKENLSTDQYVKRALQQLLK.

It belongs to the RuvA family. In terms of assembly, homotetramer. Forms an RuvA(8)-RuvB(12)-Holliday junction (HJ) complex. HJ DNA is sandwiched between 2 RuvA tetramers; dsDNA enters through RuvA and exits via RuvB. An RuvB hexamer assembles on each DNA strand where it exits the tetramer. Each RuvB hexamer is contacted by two RuvA subunits (via domain III) on 2 adjacent RuvB subunits; this complex drives branch migration. In the full resolvosome a probable DNA-RuvA(4)-RuvB(12)-RuvC(2) complex forms which resolves the HJ.

The protein localises to the cytoplasm. Its function is as follows. The RuvA-RuvB-RuvC complex processes Holliday junction (HJ) DNA during genetic recombination and DNA repair, while the RuvA-RuvB complex plays an important role in the rescue of blocked DNA replication forks via replication fork reversal (RFR). RuvA specifically binds to HJ cruciform DNA, conferring on it an open structure. The RuvB hexamer acts as an ATP-dependent pump, pulling dsDNA into and through the RuvAB complex. HJ branch migration allows RuvC to scan DNA until it finds its consensus sequence, where it cleaves and resolves the cruciform DNA. The sequence is that of Holliday junction branch migration complex subunit RuvA from Geobacillus sp. (strain WCH70).